Consider the following 595-residue polypeptide: Aspartate--tRNA ligase (595 aa).

L-aspartate is bound at residue E171. The segment at 195-198 is aspartate; it reads QLFK. R217 contacts L-aspartate. ATP is bound by residues 217 to 219 and Q226; that span reads RDE. H448 lines the L-aspartate pocket. Residue E482 participates in ATP binding. R489 contacts L-aspartate. An ATP-binding site is contributed by 534-537; that stretch reads GLDR.

It belongs to the class-II aminoacyl-tRNA synthetase family. Type 1 subfamily. Homodimer.

The protein localises to the cytoplasm. It carries out the reaction tRNA(Asp) + L-aspartate + ATP = L-aspartyl-tRNA(Asp) + AMP + diphosphate. Functionally, catalyzes the attachment of L-aspartate to tRNA(Asp) in a two-step reaction: L-aspartate is first activated by ATP to form Asp-AMP and then transferred to the acceptor end of tRNA(Asp). The sequence is that of Aspartate--tRNA ligase from Erwinia tasmaniensis (strain DSM 17950 / CFBP 7177 / CIP 109463 / NCPPB 4357 / Et1/99).